A 336-amino-acid chain; its full sequence is Glycerol-3-phosphate dehydrogenase [NAD(P)+] (336 aa).

NADPH contacts are provided by Ser-11, Trp-12, Arg-32, Arg-33, and Lys-110. Positions 110 and 140 each coordinate sn-glycerol 3-phosphate. NADPH is bound at residue Ala-144. Residues Lys-195, Asp-248, Ser-258, Arg-259, and Asn-260 each contribute to the sn-glycerol 3-phosphate site. Catalysis depends on Lys-195, which acts as the Proton acceptor. Arg-259 provides a ligand contact to NADPH. 2 residues coordinate NADPH: Val-284 and Glu-286.

Belongs to the NAD-dependent glycerol-3-phosphate dehydrogenase family.

The protein localises to the cytoplasm. The catalysed reaction is sn-glycerol 3-phosphate + NAD(+) = dihydroxyacetone phosphate + NADH + H(+). It catalyses the reaction sn-glycerol 3-phosphate + NADP(+) = dihydroxyacetone phosphate + NADPH + H(+). The protein operates within membrane lipid metabolism; glycerophospholipid metabolism. In terms of biological role, catalyzes the reduction of the glycolytic intermediate dihydroxyacetone phosphate (DHAP) to sn-glycerol 3-phosphate (G3P), the key precursor for phospholipid synthesis. This Nocardia farcinica (strain IFM 10152) protein is Glycerol-3-phosphate dehydrogenase [NAD(P)+].